The sequence spans 210 residues: Large ribosomal subunit protein uL3 (210 aa).

Gln-151 is subject to N5-methylglutamine.

The protein belongs to the universal ribosomal protein uL3 family. In terms of assembly, part of the 50S ribosomal subunit. Forms a cluster with proteins L14 and L19. Post-translationally, methylated by PrmB.

Functionally, one of the primary rRNA binding proteins, it binds directly near the 3'-end of the 23S rRNA, where it nucleates assembly of the 50S subunit. This Aeromonas hydrophila subsp. hydrophila (strain ATCC 7966 / DSM 30187 / BCRC 13018 / CCUG 14551 / JCM 1027 / KCTC 2358 / NCIMB 9240 / NCTC 8049) protein is Large ribosomal subunit protein uL3.